Here is a 72-residue protein sequence, read N- to C-terminus: Large ribosomal subunit protein bL28 (72 aa).

The protein belongs to the bacterial ribosomal protein bL28 family.

The sequence is that of Large ribosomal subunit protein bL28 from Chlorobaculum tepidum (strain ATCC 49652 / DSM 12025 / NBRC 103806 / TLS) (Chlorobium tepidum).